The following is a 255-amino-acid chain: Small ribosomal subunit protein uS2 (255 aa).

The tract at residues 232 to 255 (ASGRDLGASEEVPVEPALEEASEA) is disordered.

Belongs to the universal ribosomal protein uS2 family.

The protein is Small ribosomal subunit protein uS2 of Rhizobium meliloti (strain 1021) (Ensifer meliloti).